A 489-amino-acid polypeptide reads, in one-letter code: Cytochrome P450 2C41 (489 aa).

Position 434 (Cys434) interacts with heme.

The protein belongs to the cytochrome P450 family. It depends on heme as a cofactor.

It localises to the endoplasmic reticulum membrane. It is found in the microsome membrane. It carries out the reaction an organic molecule + reduced [NADPH--hemoprotein reductase] + O2 = an alcohol + oxidized [NADPH--hemoprotein reductase] + H2O + H(+). Cytochromes P450 are a group of heme-thiolate monooxygenases. In liver microsomes, this enzyme is involved in an NADPH-dependent electron transport pathway. It oxidizes a variety of structurally unrelated compounds, including steroids, fatty acids, and xenobiotics. This Canis lupus familiaris (Dog) protein is Cytochrome P450 2C41 (CYP2C41).